The following is a 260-amino-acid chain: Ubiquinone/menaquinone biosynthesis C-methyltransferase UbiE (260 aa).

Residues Thr83, Asp104, 132-133, and Ser149 contribute to the S-adenosyl-L-methionine site; that span reads NA.

The protein belongs to the class I-like SAM-binding methyltransferase superfamily. MenG/UbiE family.

It catalyses the reaction a 2-demethylmenaquinol + S-adenosyl-L-methionine = a menaquinol + S-adenosyl-L-homocysteine + H(+). The enzyme catalyses a 2-methoxy-6-(all-trans-polyprenyl)benzene-1,4-diol + S-adenosyl-L-methionine = a 5-methoxy-2-methyl-3-(all-trans-polyprenyl)benzene-1,4-diol + S-adenosyl-L-homocysteine + H(+). It functions in the pathway quinol/quinone metabolism; menaquinone biosynthesis; menaquinol from 1,4-dihydroxy-2-naphthoate: step 2/2. It participates in cofactor biosynthesis; ubiquinone biosynthesis. Its function is as follows. Methyltransferase required for the conversion of demethylmenaquinol (DMKH2) to menaquinol (MKH2) and the conversion of 2-polyprenyl-6-methoxy-1,4-benzoquinol (DDMQH2) to 2-polyprenyl-3-methyl-6-methoxy-1,4-benzoquinol (DMQH2). The sequence is that of Ubiquinone/menaquinone biosynthesis C-methyltransferase UbiE from Vibrio cholerae serotype O1 (strain ATCC 39315 / El Tor Inaba N16961).